The chain runs to 344 residues: N-acetyl-gamma-glutamyl-phosphate reductase (344 aa).

Cysteine 147 is a catalytic residue.

The protein belongs to the NAGSA dehydrogenase family. Type 1 subfamily.

Its subcellular location is the cytoplasm. The catalysed reaction is N-acetyl-L-glutamate 5-semialdehyde + phosphate + NADP(+) = N-acetyl-L-glutamyl 5-phosphate + NADPH + H(+). The protein operates within amino-acid biosynthesis; L-arginine biosynthesis; N(2)-acetyl-L-ornithine from L-glutamate: step 3/4. Functionally, catalyzes the NADPH-dependent reduction of N-acetyl-5-glutamyl phosphate to yield N-acetyl-L-glutamate 5-semialdehyde. This is N-acetyl-gamma-glutamyl-phosphate reductase from Bacillus amyloliquefaciens (Bacillus velezensis).